The sequence spans 97 residues: Putative pterin-4-alpha-carbinolamine dehydratase (97 aa).

It belongs to the pterin-4-alpha-carbinolamine dehydratase family.

The enzyme catalyses (4aS,6R)-4a-hydroxy-L-erythro-5,6,7,8-tetrahydrobiopterin = (6R)-L-erythro-6,7-dihydrobiopterin + H2O. This chain is Putative pterin-4-alpha-carbinolamine dehydratase, found in Phenylobacterium zucineum (strain HLK1).